The chain runs to 148 residues: Succinate dehydrogenase assembly factor 3, mitochondrial (148 aa).

Residues 1-12 (MYALRPTLRRSA) constitute a mitochondrion transit peptide. Residues 129-148 (RGTEGDLEDGDGGESGQKSQ) form a disordered region.

The protein belongs to the complex I LYR family. SDHAF3 subfamily. As to quaternary structure, interacts with the iron-sulfur protein subunit within the SDH catalytic dimer.

Its subcellular location is the mitochondrion matrix. Its function is as follows. Plays an essential role in the assembly of succinate dehydrogenase (SDH), an enzyme complex (also referred to as respiratory complex II) that is a component of both the tricarboxylic acid (TCA) cycle and the mitochondrial electron transport chain, and which couples the oxidation of succinate to fumarate with the reduction of ubiquinone (coenzyme Q) to ubiquinol. Promotes maturation of the iron-sulfur protein subunit of the SDH catalytic dimer, protecting it from the deleterious effects of oxidants. May act together with SDHAF1. This chain is Succinate dehydrogenase assembly factor 3, mitochondrial, found in Neurospora crassa (strain ATCC 24698 / 74-OR23-1A / CBS 708.71 / DSM 1257 / FGSC 987).